A 132-amino-acid polypeptide reads, in one-letter code: Small ribosomal subunit protein uS8 (132 aa).

Belongs to the universal ribosomal protein uS8 family. Part of the 30S ribosomal subunit. Contacts proteins S5 and S12.

Functionally, one of the primary rRNA binding proteins, it binds directly to 16S rRNA central domain where it helps coordinate assembly of the platform of the 30S subunit. The protein is Small ribosomal subunit protein uS8 of Clostridium tetani (strain Massachusetts / E88).